We begin with the raw amino-acid sequence, 298 residues long: Syntaxin-125 (298 aa).

M1 is modified (N-acetylmethionine). Topologically, residues 1-274 are cytoplasmic; that stretch reads MNDLFSNSFK…KSSRKWTCYA (274 aa). Positions 25-155 form a coiled coil; sequence TMNLDKFFED…NEYKETVERR (131 aa). One can recognise a t-SNARE coiled-coil homology domain in the interval 198–260; that stretch reads ISEIQERHDA…RRGTDQLQDA (63 aa). Residues 275 to 295 traverse the membrane as a helical; Anchor for type IV membrane protein segment; it reads IILFIVIFILLLIPLLPHIML. Residues 296-298 lie on the Vesicular side of the membrane; sequence MLK.

Belongs to the syntaxin family. In terms of assembly, part of the t-SNARE complex.

It is found in the membrane. Functionally, vesicle trafficking protein that functions in the secretory pathway. The sequence is that of Syntaxin-125 (SYP125) from Arabidopsis thaliana (Mouse-ear cress).